Here is a 101-residue protein sequence, read N- to C-terminus: Putative pterin-4-alpha-carbinolamine dehydratase (101 aa).

This sequence belongs to the pterin-4-alpha-carbinolamine dehydratase family.

The enzyme catalyses (4aS,6R)-4a-hydroxy-L-erythro-5,6,7,8-tetrahydrobiopterin = (6R)-L-erythro-6,7-dihydrobiopterin + H2O. This is Putative pterin-4-alpha-carbinolamine dehydratase from Rhodopseudomonas palustris (strain BisB18).